The sequence spans 153 residues: Small ribosomal subunit protein bS6 (153 aa).

Residues 94–153 are disordered; that stretch reads EAHEEGPSAMMQKRDRDDRPRRDGDRPDRGPREDRGPRPPREGGFGDREDRPRRPREDRA.

The protein belongs to the bacterial ribosomal protein bS6 family.

Functionally, binds together with bS18 to 16S ribosomal RNA. The sequence is that of Small ribosomal subunit protein bS6 from Agrobacterium fabrum (strain C58 / ATCC 33970) (Agrobacterium tumefaciens (strain C58)).